A 356-amino-acid chain; its full sequence is Arginine kinase Lit v 2.0101 (356 aa).

One can recognise a Phosphagen kinase N-terminal domain in the interval 9 to 91 (KLEAGFKKLE…FDPIIEDYHV (83 aa)). 64–68 (GVGIY) lines the L-arginine pocket. The 238-residue stretch at 119–356 (FVISTRVRCG…LELIKIEKEM (238 aa)) folds into the Phosphagen kinase C-terminal domain. ATP is bound by residues 122–126 (STRVR) and H185. E225 is a binding site for L-arginine. ATP is bound at residue R229. C271 contacts L-arginine. ATP-binding positions include 280 to 284 (RASVH) and 309 to 314 (RGTRGE). E314 provides a ligand contact to L-arginine.

This sequence belongs to the ATP:guanido phosphotransferase family. In terms of assembly, monomer. Muscle (at protein level).

The catalysed reaction is L-arginine + ATP = N(omega)-phospho-L-arginine + ADP + H(+). The enzyme catalyses dTDP + ATP = dTTP + ADP. Catalyzes the reversible transfer of high energy ATP gamma-phosphate group to L-arginine. Has nucleoside diphosphate kinase-like activity toward dTDP. Binds and phosphorylates dTDP using ATP as a phosphate donor. Does not phosphorylate dADP, dCDP, dGDP, dTMP or thymidine. In Penaeus vannamei (Whiteleg shrimp), this protein is Arginine kinase Lit v 2.0101.